Reading from the N-terminus, the 150-residue chain is Deoxyuridine 5'-triphosphate nucleotidohydrolase (150 aa).

Substrate is bound by residues 69-71 (RSG), Asn-82, 86-88 (LID), and Lys-96.

Belongs to the dUTPase family. It depends on Mg(2+) as a cofactor.

The catalysed reaction is dUTP + H2O = dUMP + diphosphate + H(+). It functions in the pathway pyrimidine metabolism; dUMP biosynthesis; dUMP from dCTP (dUTP route): step 2/2. This enzyme is involved in nucleotide metabolism: it produces dUMP, the immediate precursor of thymidine nucleotides and it decreases the intracellular concentration of dUTP so that uracil cannot be incorporated into DNA. This Neisseria gonorrhoeae (strain ATCC 700825 / FA 1090) protein is Deoxyuridine 5'-triphosphate nucleotidohydrolase.